Here is a 332-residue protein sequence, read N- to C-terminus: L-lactate dehydrogenase A chain (332 aa).

NAD(+) contacts are provided by residues 29–57 (GAVGMACAISILMKDLADELTLVDVVEDK) and Arg99. 3 residues coordinate substrate: Arg106, Asn138, and Arg169. Asn138 contacts NAD(+). The active-site Proton acceptor is His193. Residue Thr248 coordinates substrate.

The protein belongs to the LDH/MDH superfamily. LDH family. Homotetramer.

It is found in the cytoplasm. The catalysed reaction is (S)-lactate + NAD(+) = pyruvate + NADH + H(+). It functions in the pathway fermentation; pyruvate fermentation to lactate; (S)-lactate from pyruvate: step 1/1. Functionally, interconverts simultaneously and stereospecifically pyruvate and lactate with concomitant interconversion of NADH and NAD(+). This is L-lactate dehydrogenase A chain (LDHA) from Gallus gallus (Chicken).